Reading from the N-terminus, the 136-residue chain is Nucleoside diphosphate kinase (136 aa).

Residues Lys-9, Phe-57, Arg-85, Thr-91, Arg-102, and Asn-112 each coordinate ATP. The active-site Pros-phosphohistidine intermediate is His-115.

The protein belongs to the NDK family. In terms of assembly, homotetramer. Mg(2+) serves as cofactor.

It is found in the cytoplasm. The enzyme catalyses a 2'-deoxyribonucleoside 5'-diphosphate + ATP = a 2'-deoxyribonucleoside 5'-triphosphate + ADP. It carries out the reaction a ribonucleoside 5'-diphosphate + ATP = a ribonucleoside 5'-triphosphate + ADP. Functionally, major role in the synthesis of nucleoside triphosphates other than ATP. The ATP gamma phosphate is transferred to the NDP beta phosphate via a ping-pong mechanism, using a phosphorylated active-site intermediate. In Acetivibrio thermocellus (strain ATCC 27405 / DSM 1237 / JCM 9322 / NBRC 103400 / NCIMB 10682 / NRRL B-4536 / VPI 7372) (Clostridium thermocellum), this protein is Nucleoside diphosphate kinase.